Consider the following 197-residue polypeptide: ATP-dependent Clp protease proteolytic subunit 1 (197 aa).

Ser96 (nucleophile) is an active-site residue. His121 is an active-site residue.

The protein belongs to the peptidase S14 family. Fourteen ClpP subunits assemble into 2 heptameric rings which stack back to back to give a disk-like structure with a central cavity, resembling the structure of eukaryotic proteasomes.

Its subcellular location is the cytoplasm. It carries out the reaction Hydrolysis of proteins to small peptides in the presence of ATP and magnesium. alpha-casein is the usual test substrate. In the absence of ATP, only oligopeptides shorter than five residues are hydrolyzed (such as succinyl-Leu-Tyr-|-NHMec, and Leu-Tyr-Leu-|-Tyr-Trp, in which cleavage of the -Tyr-|-Leu- and -Tyr-|-Trp bonds also occurs).. In terms of biological role, cleaves peptides in various proteins in a process that requires ATP hydrolysis. Has a chymotrypsin-like activity. Plays a major role in the degradation of misfolded proteins. This Synechococcus sp. (strain ATCC 27144 / PCC 6301 / SAUG 1402/1) (Anacystis nidulans) protein is ATP-dependent Clp protease proteolytic subunit 1.